A 240-amino-acid chain; its full sequence is Splicing factor U2AF 35 kDa subunit (240 aa).

At A2 the chain carries N-acetylalanine. The segment at 12–40 adopts a C3H1-type 1 zinc-finger fold; it reads EKDKVNCSFYFKIGACRHGDRCSRLHNKP. Position 39 is an N6-methyllysine (K39). A phosphoserine mark is found at S61 and S145. The region spanning 65–147 is the RRM domain; it reads LRCAVSDVEM…QPIHAELSPV (83 aa). The C3H1-type 2 zinc finger occupies 149–176; it reads DFREACCRQYEMGECTRGGFCNFMHLKP. An Omega-N-methylarginine modification is found at R165. Positions 183–240 are disordered; sequence RELYGRRRKKHRSRSRSRERRSRSRDRGRGGGGGGGGGGGGRERDRRRSRDRERSGRF. The segment covering 188–208 has biased composition (basic residues); the sequence is RRRKKHRSRSRSRERRSRSRD. The span at 212-222 shows a compositional bias: gly residues; that stretch reads GGGGGGGGGGG. Over residues 223-240 the composition is skewed to basic and acidic residues; that stretch reads GRERDRRRSRDRERSGRF.

This sequence belongs to the splicing factor SR family. Identified in the spliceosome C complex. Heterodimer with U2AF2. Interacts (via RS domain) with PHF5A (via N-terminus). Interacts with ZRANB2. Interacts with SDE2. Interacts with SF3B1.

The protein localises to the nucleus. It localises to the nucleus speckle. In terms of biological role, plays a critical role in both constitutive and enhancer-dependent splicing by mediating protein-protein interactions and protein-RNA interactions required for accurate 3'-splice site selection. Recruits U2 snRNP to the branch point. Directly mediates interactions between U2AF2 and proteins bound to the enhancers and thus may function as a bridge between U2AF2 and the enhancer complex to recruit it to the adjacent intron. In Homo sapiens (Human), this protein is Splicing factor U2AF 35 kDa subunit (U2AF1).